Here is a 156-residue protein sequence, read N- to C-terminus: ATP synthase subunit b (156 aa).

Residues 12-32 form a helical membrane-spanning segment; sequence VAFLIFVLFCMKYVWPPVITA.

Belongs to the ATPase B chain family. F-type ATPases have 2 components, F(1) - the catalytic core - and F(0) - the membrane proton channel. F(1) has five subunits: alpha(3), beta(3), gamma(1), delta(1), epsilon(1). F(0) has three main subunits: a(1), b(2) and c(10-14). The alpha and beta chains form an alternating ring which encloses part of the gamma chain. F(1) is attached to F(0) by a central stalk formed by the gamma and epsilon chains, while a peripheral stalk is formed by the delta and b chains.

It is found in the cell inner membrane. In terms of biological role, f(1)F(0) ATP synthase produces ATP from ADP in the presence of a proton or sodium gradient. F-type ATPases consist of two structural domains, F(1) containing the extramembraneous catalytic core and F(0) containing the membrane proton channel, linked together by a central stalk and a peripheral stalk. During catalysis, ATP synthesis in the catalytic domain of F(1) is coupled via a rotary mechanism of the central stalk subunits to proton translocation. Component of the F(0) channel, it forms part of the peripheral stalk, linking F(1) to F(0). The protein is ATP synthase subunit b of Pseudomonas putida (strain GB-1).